The primary structure comprises 215 residues: MSGVLGIRDLGLQPYEPVLEAMRRFTEQRGPESQDEVWLVEHPPVFTQGQAGKAEHLLIPGEIPVVQTDRGGQVTYHGPGQLVAYLLLDVRRLSIGVRELVSRIEQTLIDLLASYGVQAVAKPDAPGVYVDGAKIASLGLRIRNGRSFHGLALNVDMDLAPFRRINPCGYAGLAMTQLRDLAGPIELDEVRTRLRGQLVRHLDYAEQTTLTGGID.

The region spanning 31 to 206 (PESQDEVWLV…QLVRHLDYAE (176 aa)) is the BPL/LPL catalytic domain. Residues 70–77 (RGGQVTYH), 137–139 (SLG), and 150–152 (GLA) contribute to the substrate site. Catalysis depends on Cys-168, which acts as the Acyl-thioester intermediate.

It belongs to the LipB family.

Its subcellular location is the cytoplasm. It carries out the reaction octanoyl-[ACP] + L-lysyl-[protein] = N(6)-octanoyl-L-lysyl-[protein] + holo-[ACP] + H(+). It participates in protein modification; protein lipoylation via endogenous pathway; protein N(6)-(lipoyl)lysine from octanoyl-[acyl-carrier-protein]: step 1/2. Functionally, catalyzes the transfer of endogenously produced octanoic acid from octanoyl-acyl-carrier-protein onto the lipoyl domains of lipoate-dependent enzymes. Lipoyl-ACP can also act as a substrate although octanoyl-ACP is likely to be the physiological substrate. The polypeptide is Octanoyltransferase (Pseudomonas entomophila (strain L48)).